We begin with the raw amino-acid sequence, 409 residues long: Elongation factor Tu, plastid (409 aa).

In terms of domain architecture, tr-type G spans 10–214 (KPHINIGTIG…KIDSYIPTPI (205 aa)). Residues 19–26 (GHVDHGKT) are G1. Residue 19-26 (GHVDHGKT) participates in GTP binding. Threonine 26 is a Mg(2+) binding site. The segment at 60–64 (GITIN) is G2. The interval 81-84 (DCPG) is G3. Residues 81-85 (DCPGH) and 136-139 (NKED) each bind GTP. The interval 136–139 (NKED) is G4. The interval 174–176 (SAL) is G5.

Belongs to the TRAFAC class translation factor GTPase superfamily. Classic translation factor GTPase family. EF-Tu/EF-1A subfamily.

It is found in the plastid. It catalyses the reaction GTP + H2O = GDP + phosphate + H(+). GTP hydrolase that promotes the GTP-dependent binding of aminoacyl-tRNA to the A-site of ribosomes during protein biosynthesis. The polypeptide is Elongation factor Tu, plastid (tufA) (Euglena longa (Euglenophycean alga)).